A 379-amino-acid chain; its full sequence is Chaperone protein DnaJ (379 aa).

The J domain maps to 5–70 (DYYESLGVAK…QKRAAYDQYG (66 aa)). The CR-type zinc-finger motif lies at 134 to 212 (GVTKEIRIPA…CHGHGRVEKS (79 aa)). Zn(2+)-binding residues include cysteine 147, cysteine 150, cysteine 164, cysteine 167, cysteine 186, cysteine 189, cysteine 200, and cysteine 203. 4 CXXCXGXG motif repeats span residues 147–154 (CDVCHGNG), 164–171 (CPTCHGNG), 186–193 (CPHCHGRG), and 200–207 (CIKCHGHG).

The protein belongs to the DnaJ family. In terms of assembly, homodimer. It depends on Zn(2+) as a cofactor.

It localises to the cytoplasm. Participates actively in the response to hyperosmotic and heat shock by preventing the aggregation of stress-denatured proteins and by disaggregating proteins, also in an autonomous, DnaK-independent fashion. Unfolded proteins bind initially to DnaJ; upon interaction with the DnaJ-bound protein, DnaK hydrolyzes its bound ATP, resulting in the formation of a stable complex. GrpE releases ADP from DnaK; ATP binding to DnaK triggers the release of the substrate protein, thus completing the reaction cycle. Several rounds of ATP-dependent interactions between DnaJ, DnaK and GrpE are required for fully efficient folding. Also involved, together with DnaK and GrpE, in the DNA replication of plasmids through activation of initiation proteins. The chain is Chaperone protein DnaJ from Pectobacterium atrosepticum (strain SCRI 1043 / ATCC BAA-672) (Erwinia carotovora subsp. atroseptica).